A 419-amino-acid polypeptide reads, in one-letter code: Capsule polysaccharide modification protein LipB (419 aa).

The protein resides in the cell inner membrane. Involved in the phospholipid modification of the capsular polysaccharide, a strong requirement for its translocation to the cell surface. The sequence is that of Capsule polysaccharide modification protein LipB (lipB) from Neisseria meningitidis serogroup B (strain ATCC BAA-335 / MC58).